The chain runs to 720 residues: NADH-ubiquinone oxidoreductase 78 kDa subunit, mitochondrial (720 aa).

The N-terminal 23 residues, 1–23 (MNSIKSHILRSSKRYISASSKRL), are a transit peptide targeting the mitochondrion. The region spanning 24–102 (AEVEVTVDGR…GMVVHTDSER (79 aa)) is the 2Fe-2S ferredoxin-type domain. 4 residues coordinate [2Fe-2S] cluster: Cys58, Cys69, Cys72, and Cys86. A 4Fe-4S His(Cys)3-ligated-type domain is found at 102 to 141 (RIKKAREGVTEMLLENHPLDCPVCDQGGECDLQEQSQRYG). Positions 241–297 (LKRTETIDVLDAVGSNIRVDTRGIEVMRVLPRLNDDVNEEWISDKTRFACDGLKTQR) constitute a 4Fe-4S Mo/W bis-MGD-type domain.

The protein belongs to the complex I 75 kDa subunit family. Core subunit of respiratory chain NADH dehydrogenase (Complex I) which is composed of 45 different subunits. This is the largest subunit of complex I and it is a component of the iron-sulfur (IP) fragment of the enzyme. Requires [2Fe-2S] cluster as cofactor. It depends on [4Fe-4S] cluster as a cofactor.

The protein localises to the mitochondrion. It catalyses the reaction a ubiquinone + NADH + 5 H(+)(in) = a ubiquinol + NAD(+) + 4 H(+)(out). In terms of biological role, core subunit of the mitochondrial membrane respiratory chain NADH dehydrogenase (Complex I) which catalyzes electron transfer from NADH through the respiratory chain, using ubiquinone as an electron acceptor. Essential for catalysing the entry and efficient transfer of electrons within complex I. Plays a key role in the assembly and stability of complex I and participates in the association of complex I with ubiquinol-cytochrome reductase complex (Complex III) to form supercomplexes. Plays a role in cell wall integrity and is involved in osmotic and oxidative resistance, yeast to hypha transition, and the ability to damage and invade oral epithelial cells. The protein is NADH-ubiquinone oxidoreductase 78 kDa subunit, mitochondrial of Candida albicans (strain SC5314 / ATCC MYA-2876) (Yeast).